Reading from the N-terminus, the 276-residue chain is D-aminoacyl-tRNA deacylase (276 aa).

Belongs to the DtdA deacylase family. In terms of assembly, monomer. Requires Zn(2+) as cofactor.

It carries out the reaction a D-aminoacyl-tRNA + H2O = a tRNA + a D-alpha-amino acid + H(+). It catalyses the reaction glycyl-tRNA(Ala) + H2O = tRNA(Ala) + glycine + H(+). In terms of biological role, D-aminoacyl-tRNA deacylase with broad substrate specificity. By recycling D-aminoacyl-tRNA to D-amino acids and free tRNA molecules, this enzyme counteracts the toxicity associated with the formation of D-aminoacyl-tRNA entities in vivo. The protein is D-aminoacyl-tRNA deacylase of Korarchaeum cryptofilum (strain OPF8).